The chain runs to 1244 residues: Membrane-associated phosphatidylinositol transfer protein 1 (1244 aa).

Residue T59 is modified to Phosphothreonine. Disordered regions lie at residues 258 to 331 (KCNT…QSLS) and 339 to 358 (ARDS…EGFS). T287 carries the post-translational modification Phosphothreonine; by CDK1. Residues 299–319 (ASPDASFGKQWSSSSRSSYSS) show a composition bias toward low complexity. Phosphoserine occurs at positions 300, 304, 319, 326, 329, 342, 345, 346, and 373. S382 carries the post-translational modification Phosphoserine; by CDK1. Residues 581–682 (AGTGSRGSSR…SSEAPDGPSS (102 aa)) form a disordered region. Residues S593, S600, and S621 each carry the phosphoserine modification. Residues 643–658 (GSQNSLQAAPATTSSW) show a composition bias toward polar residues. Residues 686-880 (LDFKVSGFFL…VAFILRQVIE (195 aa)) enclose the DDHD domain. Position 896 is a phosphoserine (S896). Positions 1206-1244 (QLLRSRGPSQAEREGPGTPPTTLARGKARSISLKLDSEE) are disordered. Omega-N-methylarginine occurs at positions 1211 and 1218. S1237 is modified (phosphoserine).

This sequence belongs to the PtdIns transfer protein family. PI transfer class IIA subfamily. In terms of assembly, interacts with PIK4CA. Interacts with PTK2B via its C-terminus. Interacts with RHOA. Has higher affinity for the inactive, GDP-bound form of RHOA. The CDK1-phosphorylated form interacts with PLK1. Interacts with VAPB. Post-translationally, phosphorylated on multiple sites by CDK1 at the onset of mitosis. Phosphorylation facilitates dissociation from the Golgi complex and is required for interaction with PLK1. Phosphorylated on threonine residues upon treatment with oleic acid. In terms of processing, phosphorylated on tyrosine residues by PTK2B. As to expression, ubiquitous.

The protein resides in the cytoplasm. It localises to the golgi apparatus. The protein localises to the golgi stack membrane. It is found in the endoplasmic reticulum membrane. Its subcellular location is the lipid droplet. The protein resides in the cleavage furrow. It localises to the midbody. It carries out the reaction a 1,2-diacyl-sn-glycero-3-phospho-(1D-myo-inositol)(in) = a 1,2-diacyl-sn-glycero-3-phospho-(1D-myo-inositol)(out). Its function is as follows. Catalyzes the transfer of phosphatidylinositol (PI) between membranes. Binds PI, phosphatidylcholine (PC) and phosphatidic acid (PA) with the binding affinity order of PI &gt; PA &gt; PC. Regulates RHOA activity, and plays a role in cytoskeleton remodeling. Necessary for normal completion of cytokinesis. Plays a role in maintaining normal diacylglycerol levels in the Golgi apparatus. Necessary for maintaining the normal structure of the endoplasmic reticulum and the Golgi apparatus. Required for protein export from the endoplasmic reticulum and the Golgi. Binds calcium ions. This Homo sapiens (Human) protein is Membrane-associated phosphatidylinositol transfer protein 1 (PITPNM1).